We begin with the raw amino-acid sequence, 88 residues long: MSEMIVLPHKVTVKVPLASRVDAERCLQVLAPDRELKEELVQRNLFVDDNYLVVNYSCSSARMTRVTVNSLFENLYLIIDTMHELSSL.

It belongs to the CTAG/PCC1 family. As to quaternary structure, component of the EKC/KEOPS complex composed of at least of SPAP27G11.07c/BUD32, cgi121, gon7, pgp2 and SPAC4H3.13/PCC1; the whole complex dimerizes.

It localises to the cytoplasm. Its subcellular location is the nucleus. It is found in the chromosome. The protein resides in the telomere. Its function is as follows. Component of the EKC/KEOPS complex that is required for the formation of a threonylcarbamoyl group on adenosine at position 37 (t(6)A37) in tRNAs that read codons beginning with adenine. The complex is probably involved in the transfer of the threonylcarbamoyl moiety of threonylcarbamoyl-AMP (TC-AMP) to the N6 group of A37. SPAC4H3.13/PCC1 functions as a dimerization module for the complex. The EKC/KEOPS complex also promotes both telomere uncapping and telomere elongation. The complex is required for efficient recruitment of transcriptional coactivators. The sequence is that of EKC/KEOPS complex subunit SPAC4H3.13 from Schizosaccharomyces pombe (strain 972 / ATCC 24843) (Fission yeast).